Reading from the N-terminus, the 205-residue chain is FMN-dependent NADH:quinone oxidoreductase (205 aa).

FMN contacts are provided by residues serine 10 and 16–18; that span reads SVS.

This sequence belongs to the azoreductase type 1 family. In terms of assembly, homodimer. FMN serves as cofactor.

The catalysed reaction is 2 a quinone + NADH + H(+) = 2 a 1,4-benzosemiquinone + NAD(+). The enzyme catalyses N,N-dimethyl-1,4-phenylenediamine + anthranilate + 2 NAD(+) = 2-(4-dimethylaminophenyl)diazenylbenzoate + 2 NADH + 2 H(+). Its function is as follows. Quinone reductase that provides resistance to thiol-specific stress caused by electrophilic quinones. In terms of biological role, also exhibits azoreductase activity. Catalyzes the reductive cleavage of the azo bond in aromatic azo compounds to the corresponding amines. This is FMN-dependent NADH:quinone oxidoreductase from Agrobacterium fabrum (strain C58 / ATCC 33970) (Agrobacterium tumefaciens (strain C58)).